Consider the following 245-residue polypeptide: Dehydrogenase/reductase SDR family member 6 (245 aa).

NAD(+) contacts are provided by residues 16–18 (QGI), aspartate 37, and aspartate 58. Residue arginine 144 participates in substrate binding. The Proton acceptor role is filled by tyrosine 147. NAD(+)-binding positions include lysine 151 and 180–184 (VDTPS). Substrate contacts are provided by arginine 188 and arginine 205.

The protein belongs to the short-chain dehydrogenases/reductases (SDR) family. Homotetramer. In terms of tissue distribution, detected in liver (at protein level).

The protein localises to the cytoplasm. The catalysed reaction is cis-4-hydroxy-L-proline + NAD(+) = 4-oxo-L-proline + NADH + H(+). The enzyme catalyses (R)-3-hydroxybutanoate + NAD(+) = acetoacetate + NADH + H(+). It functions in the pathway amino-acid metabolism. It participates in siderophore biosynthesis. In terms of biological role, NAD(H)-dependent dehydrogenase/reductase with a preference for cyclic substrates. Catalyzes stereoselective conversion of 4-oxo-L-proline to cis-4-hydroxy-L-proline, likely a detoxification mechanism for ketoprolines. Mediates the formation of 2,5-dihydroxybenzoate (2,5-DHBA), a siderophore that chelates free cytoplasmic iron and associates with LCN2, thereby regulating iron transport and homeostasis while protecting cells against free radical-induced oxidative stress. The iron-siderophore complex is imported into mitochondria, providing an iron source for mitochondrial metabolic processes in particular heme synthesis. May act as a 3-hydroxybutyrate dehydrogenase. This Homo sapiens (Human) protein is Dehydrogenase/reductase SDR family member 6.